A 141-amino-acid chain; its full sequence is Nucleoside diphosphate kinase (141 aa).

Lys-11, Phe-59, Arg-87, Thr-93, Arg-104, and Asn-114 together coordinate ATP. His-117 serves as the catalytic Pros-phosphohistidine intermediate.

It belongs to the NDK family. As to quaternary structure, homotetramer. Mg(2+) serves as cofactor.

Its subcellular location is the cytoplasm. It carries out the reaction a 2'-deoxyribonucleoside 5'-diphosphate + ATP = a 2'-deoxyribonucleoside 5'-triphosphate + ADP. The enzyme catalyses a ribonucleoside 5'-diphosphate + ATP = a ribonucleoside 5'-triphosphate + ADP. Functionally, major role in the synthesis of nucleoside triphosphates other than ATP. The ATP gamma phosphate is transferred to the NDP beta phosphate via a ping-pong mechanism, using a phosphorylated active-site intermediate. This chain is Nucleoside diphosphate kinase, found in Xanthomonas axonopodis pv. citri (strain 306).